The sequence spans 78 residues: uncharacterized protein (78 aa).

2 helical membrane passes run 5–24 (LALLILVIPGAISALGIKLM) and 39–61 (LWLQGLSGFIFFAIGLYVLAGFI).

It is found in the cell membrane. This is an uncharacterized protein from Bacillus subtilis (strain 168).